The following is a 351-amino-acid chain: Vacuolar protein sorting-associated protein 72 homolog (351 aa).

Positions 1–136 (MAASRSRRNN…DSGRKSIRTS (136 aa)) are disordered. A compositionally biased stretch (acidic residues) spans 36–72 (QEDEEDKEYEQKDEEEDVVDSDFSIDENDEPVSDQEE). Phosphoserine is present on residues S56, S59, and S68. Positions 87–100 (AYKETKPAVKKETK) are enriched in basic and acidic residues. Over residues 105 to 121 (LHKKRPGGGVTKRRPRP) the composition is skewed to basic residues. A coiled-coil region spans residues 142–202 (QATKIRLKEL…QKMELEKKKS (61 aa)). Residues 156-208 (KRKKKKVRVEDYMPTQEELLEEAKITEEENTKSLEKFQKMELEKKKSRPTKRT) mediate DNA binding.

The protein belongs to the VPS72/YL1 family. Interacts with H2AV. Component of the Tip60 chromatin-remodeling complex which contains the catalytic subunit Tip60 and the subunits Domino, Tra1, Brd8, E(Pc), DMAP1, Pontin, Reptin, Ing3, Act87E, BAP55, Mrg15, MrgBP, Gas41 and YL-1.

Its subcellular location is the nucleus. Functionally, part of the Tip60 chromatin-remodeling complex which is involved in DNA repair. Upon induction of DNA double-strand breaks, this complex acetylates phosphorylated H2AV in nucleosomes and exchanges it with unmodified H2AV. This is Vacuolar protein sorting-associated protein 72 homolog (YL-1) from Drosophila melanogaster (Fruit fly).